The sequence spans 172 residues: uncharacterized protein (172 aa).

This is an uncharacterized protein from Rattus norvegicus (Rat).